The primary structure comprises 489 residues: MTLRSIVIKSGGHRLDTSLIKKPAEINEYLASLKKETCDFATYVLCSICNSIIQKHQVQSKAKISCRKVLSCPDQSSAGGLGHKNWEPSGALILPSTKQMGAEGSPVKSRSLFCQTNHNHLVNMDPMVSNDNNQQREGEQVGAMVGDSSPEDSPSGKHWNVRKGSGLVDPQTSCIRQILLLQLELIEQQQKHLHNKNKEIEDLKAEKEMLMARIERMEHRLQMVKKDGVVSRPSQTTCHKEPEAETTTSDDVQHSGGRVQTPKQTQRGRGVKGSKGKFLLQDSPTGRSRRGQPRSPPTSQQESPALKEDMQCHSKEVPYLTTTEMYLSHWQTPPSPQRDPSTVHENTVEVPSWRESILEPLGQKEASDILECLDDSVFLKRHSKLELDEKRRKRWDIQRIREQRMFQRLQQRMNRRKVIQESEPELLSFHAEPEDVEYIMVTPFLPVVAFGSPLPNLKQQDFDLPWLDERSRCQPEVTKKRTPRRRCRK.

2 disordered regions span residues 126-164 (PMVS…VRKG) and 224-311 (VKKD…EDMQ). A coiled-coil region spans residues 179-227 (LLLQLELIEQQQKHLHNKNKEIEDLKAEKEMLMARIERMEHRLQMVKKD). The region spanning 347-466 (TVEVPSWRES…LKQQDFDLPW (120 aa)) is the PEHE domain. The tract at residues 371–389 (ECLDDSVFLKRHSKLELDE) is interaction with KAT8 HAT domain. A Bipartite nuclear localization signal motif is present at residues 380–394 (KRHSKLELDEKRRKR).

It belongs to the msl-1 family. Component of a multisubunit histone acetyltransferase complex (MSL). Interacts (via PEHE domain) with KAT8 (via HAT domain) and MSL3 (via MRG domain); both interactions are direct.

Its subcellular location is the nucleus. It localises to the nucleoplasm. It is found in the nucleus speckle. Its function is as follows. Component of histone acetyltransferase complex. Within MSL complex, promotes ubiquitination of histone H2B. This is Male-specific lethal 1-like 1 (msl1l1) from Danio rerio (Zebrafish).